The chain runs to 212 residues: Ribosomal RNA small subunit methyltransferase G (212 aa).

Residues Gly73, 127-128, and Arg143 each bind S-adenosyl-L-methionine; that span reads IE.

This sequence belongs to the methyltransferase superfamily. RNA methyltransferase RsmG family.

The protein resides in the cytoplasm. The catalysed reaction is guanosine(527) in 16S rRNA + S-adenosyl-L-methionine = N(7)-methylguanosine(527) in 16S rRNA + S-adenosyl-L-homocysteine. Specifically methylates the N7 position of guanine in position 527 of 16S rRNA. The polypeptide is Ribosomal RNA small subunit methyltransferase G (Methylobacterium sp. (strain 4-46)).